A 572-amino-acid polypeptide reads, in one-letter code: Butyrate--CoA ligase AAE11, peroxisomal (572 aa).

The short motif at 570 to 572 (SRL) is the Microbody targeting signal element.

It belongs to the ATP-dependent AMP-binding enzyme family. Expressed in flowers.

It localises to the peroxisome. The catalysed reaction is a medium-chain fatty acid + ATP + CoA = a medium-chain fatty acyl-CoA + AMP + diphosphate. In terms of biological role, butyrate--CoA ligase that is active in vitro with medium-chain fatty acids, with a preference for hexanoate and octanoate. The polypeptide is Butyrate--CoA ligase AAE11, peroxisomal (AAE11) (Arabidopsis thaliana (Mouse-ear cress)).